A 637-amino-acid chain; its full sequence is Glutathione hydrolase 3 (637 aa).

A helical membrane pass occupies residues 28 to 48; sequence LKISLLLLLILLATSGYYSFS. Residue Asn-50 is glycosylated (N-linked (GlcNAc...) asparagine). L-glutamate is bound at residue Arg-147. N-linked (GlcNAc...) asparagine glycans are attached at residues Asn-271, Asn-374, and Asn-398. Thr-418 acts as the Nucleophile in catalysis. Residues Thr-436, Asn-438, Glu-457, Asp-460, 488-489, and 509-510 contribute to the L-glutamate site; these read SS and GG. Asn-553 is a glycosylation site (N-linked (GlcNAc...) asparagine).

The protein belongs to the gamma-glutamyltransferase family. Expressed in roots, cotyledons, leaves, flowers and siliques.

It is found in the vacuole membrane. It carries out the reaction an N-terminal (5-L-glutamyl)-[peptide] + an alpha-amino acid = 5-L-glutamyl amino acid + an N-terminal L-alpha-aminoacyl-[peptide]. The catalysed reaction is glutathione + H2O = L-cysteinylglycine + L-glutamate. It catalyses the reaction an S-substituted glutathione + H2O = an S-substituted L-cysteinylglycine + L-glutamate. The protein operates within sulfur metabolism; glutathione metabolism. May play a role in protecting plants from some xenobiotic chemicals by degrading vacuolar glutathione conjugates into cysteine conjugates. This is Glutathione hydrolase 3 (GGT3) from Arabidopsis thaliana (Mouse-ear cress).